The primary structure comprises 555 residues: Poly(A) polymerase PAPa (555 aa).

The interval 1–20 (MNNQAYGVTPPISVANSTPK) is disordered. ATP-binding positions include 86–88 (FGS), 99–101 (DID), D153, K214, Y223, and 232–233 (GV). Mg(2+) is bound by residues D99, D101, and D153. A disordered region spans residues 532 to 555 (KRKRAVSKNEGKKKPKSVGTVSAA).

Belongs to the poly(A) polymerase family. Mg(2+) serves as cofactor. It depends on Mn(2+) as a cofactor.

Its subcellular location is the nucleus. The catalysed reaction is RNA(n) + ATP = RNA(n)-3'-adenine ribonucleotide + diphosphate. Functionally, polymerase that creates the 3'-poly(A) tail of mRNA's. May acquire specificity through interaction with a cleavage and polyadenylation factor. The sequence is that of Poly(A) polymerase PAPa (PAPA) from Candida albicans (strain SC5314 / ATCC MYA-2876) (Yeast).